The following is a 373-amino-acid chain: ADP-forming sulfoacetate-CoA ligase subunit SauC (373 aa).

Residues 9-249 enclose the ATP-grasp domain; it reads KEAFREKGLP…YLQFNGDIAL (241 aa). 35-97 contacts ATP; it reads FAEVGFPCVL…EEAVDIDREI (63 aa). Residues Glu186 and Asn188 each coordinate Mg(2+).

The protein belongs to the succinate/malate CoA ligase beta subunit family. In terms of assembly, forms a complex with SauD. It depends on Mg(2+) as a cofactor.

It catalyses the reaction sulfoacetate + ATP + CoA = sulfoacetyl-CoA + ADP + phosphate. Involved in the degradation of sulfoacetate. Catalyzes the CoA- and ATP-dependent conversion of sulfoacetate to sulfoacetyl-CoA and ADP. Cannot use other sulfonic and carboxylic acids, and shows only residual activity with 3-sulfopropanoate and malonic acid. The protein is ADP-forming sulfoacetate-CoA ligase subunit SauC of Bilophila wadsworthia (strain 3_1_6).